The primary structure comprises 82 residues: RNA-binding protein Hfq (82 aa).

The region spanning 11–71 (DTFLNSVRKS…ISTIMPAQPV (61 aa)) is the Sm domain.

It belongs to the Hfq family. Homohexamer.

In terms of biological role, RNA chaperone that binds small regulatory RNA (sRNAs) and mRNAs to facilitate mRNA translational regulation in response to envelope stress, environmental stress and changes in metabolite concentrations. Also binds with high specificity to tRNAs. The polypeptide is RNA-binding protein Hfq (Caulobacter sp. (strain K31)).